The sequence spans 372 residues: MECSSVSVLGILLVFPLLHNLVTISGQNLPAVGLFTFGDSNFDAGNKKFLTSAPLPQNFWPYGKSRDDPKGKFSDGKIVPDFIAKFMGIPHDLPPALKPGTDVSRGASFAVGSASILGSPKDSLALNQQVRKFNQMISNWKVDYIQKSVFMISIGMEDYYNFTKNNPNAEVSAQQAFVTSVTNRFKSDINLLYSSGASKFVVHLLAPLGCLPIARQEFKTGNNCYEKLNDLAKQHNAKIGPILNEMAETKPDFQFTVFDFYNVILRRTQRNMNYRFSVTNISCCGVGTHYAYGCGLPNVHSKLCEYQRSYLYFDARHNTEKAQEAFAHLIFGADPNVIQPMNVRELMVYPVNEPMREFWEDPMDEKLSLVQY.

The signal sequence occupies residues methionine 1–glycine 26. The active-site Nucleophile is serine 40. N-linked (GlcNAc...) asparagine glycosylation is found at asparagine 161 and asparagine 280. Catalysis depends on residues aspartate 314 and histidine 317.

It belongs to the 'GDSL' lipolytic enzyme family.

It is found in the secreted. The protein is GDSL esterase/lipase At1g54020 of Arabidopsis thaliana (Mouse-ear cress).